The sequence spans 95 residues: Small ribosomal subunit protein bS6 (95 aa).

Belongs to the bacterial ribosomal protein bS6 family.

Binds together with bS18 to 16S ribosomal RNA. The polypeptide is Small ribosomal subunit protein bS6 (Symbiobacterium thermophilum (strain DSM 24528 / JCM 14929 / IAM 14863 / T)).